A 526-amino-acid polypeptide reads, in one-letter code: Cyclin-L1 (526 aa).

The interval 1-36 (MASGPHSTATAAAAASSAAPSAGGSSSGTTTTTTTT) is disordered. Cyclin-like regions lie at residues 88–190 (ELIQ…RVLK) and 203–287 (KIIV…ETLR). A disordered region spans residues 318–526 (KGLNPDGTPA…SRSGHGRHRR (209 aa)). Thr-325 carries the phosphothreonine modification. Ser-335 and Ser-338 each carry phosphoserine. Residues Lys-339 and Lys-347 each participate in a glycyl lysine isopeptide (Lys-Gly) (interchain with G-Cter in SUMO2) cross-link. The span at 342-352 (SPREVKAEEKS) shows a compositional bias: basic and acidic residues. A phosphoserine mark is found at Ser-352 and Ser-355. The span at 361-370 (VKKEPEDRQQ) shows a compositional bias: basic and acidic residues. Lys-362 is covalently cross-linked (Glycyl lysine isopeptide (Lys-Gly) (interchain with G-Cter in SUMO2)). Ser-374 is subject to Phosphoserine. Basic residues-rich tracts occupy residues 382–418 (DSKR…RRSR), 438–452 (RRHH…KAKH), 460–476 (SNRH…RSQS), and 486–498 (KKHR…HRDR). The tract at residues 390 to 432 (RSASRSRSRTRSRSRSHTPRRHYNNRRSRSGTYSSRSRSRSRS) is RS. A Phosphoserine modification is found at Ser-445. The segment covering 499 to 508 (RERSRSFERS) has biased composition (basic and acidic residues). Positions 509–526 (HKSKHHGGSRSGHGRHRR) are enriched in basic residues.

It belongs to the cyclin family. Cyclin L subfamily. In terms of assembly, (Microbial infection) Interacts with human herpes virus 1 (HHV-1) transcriptional regulator ICP22. Interacts with POLR2A via its hyperphosphorylated C-terminal domain (CTD). Interacts with CDK11A, CDK12 and CDK13. Isoforms 1 and 2, but not isoform 3, interact with CDK11B. May form a ternary complex with CDK11B and casein kinase II (CKII). Interacts with pre-mRNA-splicing factors, including at least SRSF1, SRSF2 and SRSF7/SLU7. Widely expressed. Overexpression in primary tumors of head and neck squamous cell carcinomas (HNSCC).

It is found in the nucleus speckle. The protein localises to the nucleus. It localises to the nucleoplasm. Involved in pre-mRNA splicing. Functions in association with cyclin-dependent kinases (CDKs). Inhibited by the CDK-specific inhibitor CDKN1A/p21. May play a role in the regulation of RNA polymerase II (pol II). May be a candidate proto-oncogene in head and neck squamous cell carcinomas (HNSCC). This chain is Cyclin-L1 (CCNL1), found in Homo sapiens (Human).